The primary structure comprises 1502 residues: Gem-associated protein 5 (1502 aa).

Residues 1–124 form an important for interaction with U1 snRNA region; it reads MKPEPRTLPP…LHWSPTVKDL (124 aa). Residues 13–15 are interaction with U4 snRNA; it reads NWY. Position 48 is a phosphoserine (Ser-48). WD repeat units follow at residues 62-104, 107-148, 150-189, 193-264, 280-321, 333-374, 377-417, 424-464, 468-509, 533-573, and 576-622; these read GHTE…VVTE, LHQH…QHLF, EPRT…EVIH, GHDD…GVMV, TVKE…RRKY, HSRI…CCWT, SLGG…NNYD, GVKS…PPQI, YHKK…VVLQ, RYKL…LLCT, and QHHK…ESNP. Ser-624 is subject to Phosphoserine. WD repeat units lie at residues 637–677 and 680–720; these read GHTA…PLFN and GHRG…HSRP. Disordered regions lie at residues 740-797 and 819-838; these read KLKK…SPVV and SSKA…EALL. Lys-754 is covalently cross-linked (Glycyl lysine isopeptide (Lys-Gly) (interchain with G-Cter in SUMO2)). 3 positions are modified to phosphoserine: Ser-757, Ser-770, and Ser-778. Over residues 825 to 838 the composition is skewed to basic and acidic residues; the sequence is LKKEPAKEKPEALL. A Phosphoserine modification is found at Ser-845. 2 disordered regions span residues 1309–1338 and 1378–1427; these read VSDK…LSAE and HQKS…SLPE. Positions 1355-1382 form a coiled coil; it reads ASLQTSQRTVAEVQETLAEMIRQHQKSQ. Residues 1380–1391 are compositionally biased toward polar residues; sequence KSQLCKATTNGP. Positions 1392–1407 are enriched in basic and acidic residues; sequence SRDEPSRDEPSQEAER.

The protein belongs to the WD repeat gemin-5 family. As to quaternary structure, part of the core SMN complex that contains SMN1, GEMIN2/SIP1, DDX20/GEMIN3, GEMIN4, GEMIN5, GEMIN6, GEMIN7, GEMIN8 and STRAP/UNRIP. Part of the SMN-Sm complex that contains SMN1, GEMIN2/SIP1, DDX20/GEMIN3, GEMIN4, GEMIN5, GEMIN6, GEMIN7, GEMIN8, STRAP/UNRIP and the Sm proteins SNRPB, SNRPD1, SNRPD2, SNRPD3, SNRPE, SNRPF and SNRPG. Interacts directly with SMN1, SNRPB, SNRPD1, SNRPD2, SNRPD3 and SNRPE. Identified in a SMN complex that contains GEMIN2/SIP1. Interacts with cytosolic DDX20/GEMIN3 and GEMIN4. Interacts with SNRNP70 and HNRNPU. Identified in a complex with 80S ribosomes; binds to the 60S large ribosomal subunit. Interacts with the ribosomal subunits RPL3 and RPL4.

It localises to the nucleus. The protein resides in the nucleoplasm. It is found in the gem. The protein localises to the cytoplasm. Functionally, the SMN complex catalyzes the assembly of small nuclear ribonucleoproteins (snRNPs), the building blocks of the spliceosome, and thereby plays an important role in the splicing of cellular pre-mRNAs. Most spliceosomal snRNPs contain a common set of Sm proteins SNRPB, SNRPD1, SNRPD2, SNRPD3, SNRPE, SNRPF and SNRPG that assemble in a heptameric protein ring on the Sm site of the small nuclear RNA to form the core snRNP (Sm core). In the cytosol, the Sm proteins SNRPD1, SNRPD2, SNRPE, SNRPF and SNRPG are trapped in an inactive 6S pICln-Sm complex by the chaperone CLNS1A that controls the assembly of the core snRNP. To assemble core snRNPs, the SMN complex accepts the trapped 5Sm proteins from CLNS1A forming an intermediate. Binding of snRNA inside 5Sm ultimately triggers eviction of the SMN complex, thereby allowing binding of SNRPD3 and SNRPB to complete assembly of the core snRNP. Within the SMN complex, GEMIN5 recognizes and delivers the small nuclear RNAs (snRNAs) to the SMN complex. Binds to the 7-methylguanosine cap of RNA molecules. Binds to the 3'-UTR of SMN1 mRNA and regulates its translation; does not affect mRNA stability. May play a role in the regulation of protein synthesis via its interaction with ribosomes. This is Gem-associated protein 5 (Gemin5) from Mus musculus (Mouse).